Reading from the N-terminus, the 111-residue chain is uncharacterized protein (111 aa).

2 helical membrane passes run Ala45 to Ile65 and Leu91 to Ile111.

The protein resides in the cell membrane. This is an uncharacterized protein from Methanothermobacter thermautotrophicus (strain ATCC 29096 / DSM 1053 / JCM 10044 / NBRC 100330 / Delta H) (Methanobacterium thermoautotrophicum).